Here is a 309-residue protein sequence, read N- to C-terminus: Protoheme IX farnesyltransferase (309 aa).

A run of 9 helical transmembrane segments spans residues 30–49 (VMSL…PGGV), 53–75 (IGFT…NMWY), 98–118 (AGEA…MLGL), 123–143 (VAAG…SMWL), 151–171 (IVIG…AVTG), 178–198 (VLMF…LALF), 224–244 (ILIY…TEVA), 247–267 (VYLI…YDIW), and 285–305 (VFKF…LDAI).

Belongs to the UbiA prenyltransferase family. Protoheme IX farnesyltransferase subfamily. In terms of assembly, interacts with CtaA.

The protein resides in the cell inner membrane. The enzyme catalyses heme b + (2E,6E)-farnesyl diphosphate + H2O = Fe(II)-heme o + diphosphate. The protein operates within porphyrin-containing compound metabolism; heme O biosynthesis; heme O from protoheme: step 1/1. Functionally, converts heme B (protoheme IX) to heme O by substitution of the vinyl group on carbon 2 of heme B porphyrin ring with a hydroxyethyl farnesyl side group. The protein is Protoheme IX farnesyltransferase of Jannaschia sp. (strain CCS1).